A 395-amino-acid chain; its full sequence is Elongation factor Tu (395 aa).

Positions 6-205 (KPHINVGTIG…NALEKISLPT (200 aa)) constitute a tr-type G domain. The interval 15-22 (GHVDHGKT) is G1. 15-22 (GHVDHGKT) is a GTP binding site. Mg(2+) is bound at residue T22. The G2 stretch occupies residues 59–63 (GITIS). Residues 80 to 83 (DCPG) form a G3 region. GTP-binding positions include 80–84 (DCPGH) and 135–138 (NKCD). The tract at residues 135–138 (NKCD) is G4. The G5 stretch occupies residues 173 to 175 (SAV).

The protein belongs to the TRAFAC class translation factor GTPase superfamily. Classic translation factor GTPase family. EF-Tu/EF-1A subfamily. Monomer.

Its subcellular location is the cytoplasm. It catalyses the reaction GTP + H2O = GDP + phosphate + H(+). Functionally, GTP hydrolase that promotes the GTP-dependent binding of aminoacyl-tRNA to the A-site of ribosomes during protein biosynthesis. This chain is Elongation factor Tu, found in Ehrlichia chaffeensis (strain ATCC CRL-10679 / Arkansas).